Consider the following 130-residue polypeptide: Small ribosomal subunit protein uS9 (130 aa).

It belongs to the universal ribosomal protein uS9 family.

The chain is Small ribosomal subunit protein uS9 from Streptococcus thermophilus (strain CNRZ 1066).